The following is a 463-amino-acid chain: Sodium-coupled neutral amino acid transporter 7 (463 aa).

At serine 28 the chain carries Phosphoserine. The next 11 membrane-spanning stretches (helical) occupy residues 56–76 (AVFI…PAAF), 82–102 (VAAG…GLVI), 130–150 (LCEI…LIII), 179–199 (FTIS…KEIG), 206–226 (SLSV…YIWP), 240–260 (ASWM…QCHV), 283–303 (AAMV…FLTF), 320–340 (VAVA…YPIL), 372–392 (VLQT…IPDI), 396–416 (ISVI…LCLI), and 429–449 (ASWW…AFIF).

Belongs to the amino acid/polyamine transporter 2 family. In terms of assembly, interacts with the mTORC1 complex; this interaction mediates the recruitment of mTORC1 to the lysosome and its subsequent activation.

The protein localises to the lysosome membrane. Its subcellular location is the cell projection. It is found in the axon. The catalysed reaction is L-asparagine(in) + Na(+)(in) = L-asparagine(out) + Na(+)(out). It carries out the reaction L-glutamine(in) + Na(+)(in) = L-glutamine(out) + Na(+)(out). Functionally, symporter that selectively cotransports sodium ions and amino acids, such as L-glutamine and L-asparagine from the lysosome into the cytoplasm and may participates in mTORC1 activation. The transport activity requires an acidic lysosomal lumen. The chain is Sodium-coupled neutral amino acid transporter 7 from Rattus norvegicus (Rat).